Consider the following 2517-residue polypeptide: Non-reducing polyketide synthase pkbA (2517 aa).

Positions 59 to 250 (LERVAGPAEK…KRFDLRGRFH (192 aa)) are N-terminal acylcarrier protein transacylase domain (SAT). Residues 380–775 (SEPIAIIGMG…SANTVSSLKE (396 aa)) enclose the Ketosynthase family 3 (KS3) domain. Residues cysteine 547, histidine 682, and histidine 721 each act as for beta-ketoacyl synthase activity in the active site. The malonyl-CoA:ACP transacylase (MAT) domain stretch occupies residues 849–1158 (AFGGQVARSV…TGTAALADAT (310 aa)). The active-site For acyl/malonyl transferase activity is the serine 935. Residues 1221–1353 (EEFLTFVKYK…GTVVLRENDT (133 aa)) are N-terminal hotdog fold. The region spanning 1221–1530 (EEFLTFVKYK…FTRVQISSLG (310 aa)) is the PKS/mFAS DH domain. A product template (PT) domain region spans residues 1251-1525 (FVKGHAVLAE…ILGAHFTRVQ (275 aa)). Catalysis depends on histidine 1255, which acts as the Proton acceptor; for dehydratase activity. Residues 1379–1530 (DCHILQGPVV…FTRVQISSLG (152 aa)) are C-terminal hotdog fold. Residue aspartate 1437 is the Proton donor; for dehydratase activity of the active site. The Carrier 1 domain maps to 1574–1651 (RPTLEISEKL…SISKCLASYL (78 aa)). Serine 1611 is subject to O-(pantetheine 4'-phosphoryl)serine. A disordered region spans residues 1659 to 1684 (QPEDLADADSVESDSDMPTGAVTSGI). Residues 1662–1673 (DLADADSVESDS) show a composition bias toward acidic residues. The 77-residue stretch at 1685–1761 (TTPDDAVSRL…DLIALVPALN (77 aa)) folds into the Carrier 2 domain. Residue serine 1721 is modified to O-(pantetheine 4'-phosphoryl)serine. Residues 1976-2075 (LELGGGTGGT…IHRMLRPDGF (100 aa)) form a methyltransferase (CMeT) domain region. A thioesterase (TE) domain region spans residues 2200 to 2514 (LMIHGGGHIM…RGYDFLKEEV (315 aa)).

It depends on pantetheine 4'-phosphate as a cofactor.

The enzyme catalyses 3 malonyl-CoA + acetyl-CoA + S-adenosyl-L-methionine + H(+) = 3-methylorsellinate + S-adenosyl-L-homocysteine + 3 CO2 + 4 CoA. It functions in the pathway phytotoxin biosynthesis. Its function is as follows. Non-reducing polyketide synthase; part of the gene cluster that mediates the biosynthesis of cichorine, a phytotoxin active against knapweed, corn, and soybeans. The first step in the pathway is performed by the non-reducing polyketide synthase pkbA that condenses one acetyl-CoA starter unit with 3 malonyl-CoA units. PkbA also catalyzes one methylation step to produce 3-methylorsellinate. The nonribosomal peptide synthase-like protein cicB, the cytochrome P450 monooxygenase cicH and the O-methyltransferase cicE are involved in the conversion of 3-methylorsellinate into nidulol. CicB converts 3-methylorsellinate to a yet unidentified intermediate, cicH may play a ring-closing role for cichorine and cicE is plausibly responsible for the methylation of one of the phenol groups. The oxidoreductase cicC acts downstream with still unidentified enzymes to further convert nidulol into cichorin. This Emericella nidulans (strain FGSC A4 / ATCC 38163 / CBS 112.46 / NRRL 194 / M139) (Aspergillus nidulans) protein is Non-reducing polyketide synthase pkbA.